Consider the following 466-residue polypeptide: GTPase Der (466 aa).

2 EngA-type G domains span residues 3 to 167 and 176 to 350; these read PTLV…PDEP and PKIA…GAAM. GTP contacts are provided by residues 9–16, 56–60, 119–122, 182–189, 229–233, and 294–297; these read GRSNVGKS, DTGGF, NKTE, GRPNVGKS, DTAGL, and NKWD. The KH-like domain occupies 351 to 435; that stretch reads AHLPTPRLTR…PLRIEFRTGR (85 aa). The interval 433 to 466 is disordered; it reads TGRNPYAGKSPAPLTEAEAKRAHRRRRYGRKKYG. Over residues 453–466 the composition is skewed to basic residues; sequence RAHRRRRYGRKKYG.

This sequence belongs to the TRAFAC class TrmE-Era-EngA-EngB-Septin-like GTPase superfamily. EngA (Der) GTPase family. As to quaternary structure, associates with the 50S ribosomal subunit.

Its function is as follows. GTPase that plays an essential role in the late steps of ribosome biogenesis. The chain is GTPase Der from Nitrosospira multiformis (strain ATCC 25196 / NCIMB 11849 / C 71).